Consider the following 178-residue polypeptide: MPAYHSMLMEPDTKLIGNMAMLPIRSQFKGPAPRETKDTDIIDEAIYYFKANVFFKNYEIKNEADRTLIYITLYISECLKKLQKCNSKGQGEKEMYTLGITNFPIPGEPGFPLNAMYVKPSNKQEDEVMRAYLQQLRQETGLRLCDKVFDPQTDKPSKWWTCFVKRQFMNKSLSAPGQ.

This sequence belongs to the ARPC3 family. As to quaternary structure, component of the Arp2/3 complex composed of actr2/arp2, actr3/arp3, arpc1 (arpc1a or arpc1b), arpc2, arpc3, arpc4 and arpc5.

The protein resides in the cytoplasm. The protein localises to the cytoskeleton. It is found in the cell projection. Its subcellular location is the nucleus. In terms of biological role, component of the Arp2/3 complex, a multiprotein complex that mediates actin polymerization upon stimulation by nucleation-promoting factor (NPF). The Arp2/3 complex mediates the formation of branched actin networks in the cytoplasm, providing the force for cell motility. In addition to its role in the cytoplasmic cytoskeleton, the Arp2/3 complex also promotes actin polymerization in the nucleus, thereby regulating gene transcription and repair of damaged DNA. The Arp2/3 complex promotes homologous recombination (HR) repair in response to DNA damage by promoting nuclear actin polymerization, leading to drive motility of double-strand breaks (DSBs). The sequence is that of Actin-related protein 2/3 complex subunit 3-A (arpc3-a) from Xenopus laevis (African clawed frog).